The following is a 273-amino-acid chain: Large ribosomal subunit protein uL2 (273 aa).

A disordered region spans residues 221–262 (RGTAMNPVDHPHGGGEGRNFGKHPVTPWGVQTKGKKTRHNKR). The span at 253 to 262 (KGKKTRHNKR) shows a compositional bias: basic residues.

The protein belongs to the universal ribosomal protein uL2 family. In terms of assembly, part of the 50S ribosomal subunit. Forms a bridge to the 30S subunit in the 70S ribosome.

Its function is as follows. One of the primary rRNA binding proteins. Required for association of the 30S and 50S subunits to form the 70S ribosome, for tRNA binding and peptide bond formation. It has been suggested to have peptidyltransferase activity; this is somewhat controversial. Makes several contacts with the 16S rRNA in the 70S ribosome. The chain is Large ribosomal subunit protein uL2 from Haemophilus influenzae (strain ATCC 51907 / DSM 11121 / KW20 / Rd).